The primary structure comprises 544 residues: Probable protein kinase UbiB (544 aa).

Residues 123–504 form the Protein kinase domain; it reads DFDENALASA…QRWQKKMFVL (382 aa). ATP is bound by residues 129–137 and Lys-155; that span reads LASASIAQV. Asp-290 functions as the Proton acceptor in the catalytic mechanism. Transmembrane regions (helical) follow at residues 501–521 and 523–543; these read MFVL…FAAL and LAIS…GFLL.

Belongs to the ABC1 family. UbiB subfamily.

Its subcellular location is the cell inner membrane. The protein operates within cofactor biosynthesis; ubiquinone biosynthesis [regulation]. Its function is as follows. Is probably a protein kinase regulator of UbiI activity which is involved in aerobic coenzyme Q (ubiquinone) biosynthesis. This is Probable protein kinase UbiB from Histophilus somni (strain 129Pt) (Haemophilus somnus).